We begin with the raw amino-acid sequence, 294 residues long: 33 kDa chaperonin (294 aa).

2 disulfides stabilise this stretch: C239–C241 and C272–C275.

The protein belongs to the HSP33 family. Post-translationally, under oxidizing conditions two disulfide bonds are formed involving the reactive cysteines. Under reducing conditions zinc is bound to the reactive cysteines and the protein is inactive.

The protein localises to the cytoplasm. Its function is as follows. Redox regulated molecular chaperone. Protects both thermally unfolding and oxidatively damaged proteins from irreversible aggregation. Plays an important role in the bacterial defense system toward oxidative stress. The polypeptide is 33 kDa chaperonin (Lacticaseibacillus paracasei (strain ATCC 334 / BCRC 17002 / CCUG 31169 / CIP 107868 / KCTC 3260 / NRRL B-441) (Lactobacillus paracasei)).